The following is a 384-amino-acid chain: Histidinol-phosphate aminotransferase 2 (384 aa).

Position 236 is an N6-(pyridoxal phosphate)lysine (lysine 236).

The protein belongs to the class-II pyridoxal-phosphate-dependent aminotransferase family. Histidinol-phosphate aminotransferase subfamily. In terms of assembly, homodimer. Pyridoxal 5'-phosphate serves as cofactor.

The enzyme catalyses L-histidinol phosphate + 2-oxoglutarate = 3-(imidazol-4-yl)-2-oxopropyl phosphate + L-glutamate. It functions in the pathway amino-acid biosynthesis; L-histidine biosynthesis; L-histidine from 5-phospho-alpha-D-ribose 1-diphosphate: step 7/9. This is Histidinol-phosphate aminotransferase 2 (hisC2) from Nostoc sp. (strain PCC 7120 / SAG 25.82 / UTEX 2576).